We begin with the raw amino-acid sequence, 378 residues long: MKDSKKNGFFSWLSSKIKKKKTIDIRQNNTDKNHDINHEDLYTKKDLLIKQDNPKKDEIDTLNDHGKDIEKAQNTKNNFFLRLKKSLKTTKKNLGDKIYQIFLSKKIDEVLFEELEEKMLLADIGINTTNRIISNLIKDVNREDLKNSEKLYFLLKRKMFNILKKVEIPLEISSHSPFVILVVGVNGTGKTTTVAKLAEKYKLEGKSIMLAAADTFRAAGIEQLQTLGKLNNIPVIAQRSGSDPAAVIFDAVKSAKSKKIDVLIIDTAGRLHNKLHLIEELKKIVRVIKKIDISAPHEKLLIIDSCNGQNTIQQTEIFHKALNLTGIIITKLDGTAKGGVVFSLADQFQIPIRYIGIGEKMQDLGHFNSQEFIESIFT.

GTP contacts are provided by residues 184–191 (GVNGTGKT), 266–270 (DTAGR), and 330–333 (TKLD).

This sequence belongs to the GTP-binding SRP family. FtsY subfamily. As to quaternary structure, part of the signal recognition particle protein translocation system, which is composed of SRP and FtsY. SRP is a ribonucleoprotein composed of Ffh and a 4.5S RNA molecule.

The protein resides in the cell membrane. It localises to the cytoplasm. It catalyses the reaction GTP + H2O = GDP + phosphate + H(+). Functionally, involved in targeting and insertion of nascent membrane proteins into the cytoplasmic membrane. Acts as a receptor for the complex formed by the signal recognition particle (SRP) and the ribosome-nascent chain (RNC). Interaction with SRP-RNC leads to the transfer of the RNC complex to the Sec translocase for insertion into the membrane, the hydrolysis of GTP by both Ffh and FtsY, and the dissociation of the SRP-FtsY complex into the individual components. The protein is Signal recognition particle receptor FtsY of Buchnera aphidicola subsp. Acyrthosiphon pisum (strain APS) (Acyrthosiphon pisum symbiotic bacterium).